The primary structure comprises 119 residues: Small ribosomal subunit protein uS10 (119 aa).

Residue alanine 2 is modified to N-acetylalanine. Lysine 4 is covalently cross-linked (Glycyl lysine isopeptide (Lys-Gly) (interchain with G-Cter in ubiquitin)). Position 8 is an N6-succinyllysine; alternate (lysine 8). A Glycyl lysine isopeptide (Lys-Gly) (interchain with G-Cter in ubiquitin); alternate cross-link involves residue lysine 8. Threonine 9 bears the Phosphothreonine mark. N6-acetyllysine occurs at positions 34 and 75. Serine 93 carries the phosphoserine modification.

This sequence belongs to the universal ribosomal protein uS10 family. Component of the 40S small ribosomal subunit. Post-translationally, polyubiquitinated by ZNF598 via 'Lys-63'-linked ubiquitin chains when a ribosome has stalled, initiating the ribosome quality control (RQC) pathway to degrade the potentially detrimental aberrant nascent polypeptide. Deubiquitinated by OTUD3 and USP21, antagonizing ZNF598 activity. In terms of processing, ufmylated by UFL1.

The protein localises to the cytoplasm. Its function is as follows. Component of the small ribosomal subunit. The ribosome is a large ribonucleoprotein complex responsible for the synthesis of proteins in the cell. The sequence is that of Small ribosomal subunit protein uS10 (RPS20) from Sus scrofa (Pig).